The chain runs to 209 residues: Uracil phosphoribosyltransferase (209 aa).

Residues arginine 79, arginine 104, and 131-139 (DPMLATGNS) contribute to the 5-phospho-alpha-D-ribose 1-diphosphate site. Uracil contacts are provided by residues isoleucine 194 and 199 to 201 (GDA). Residue aspartate 200 coordinates 5-phospho-alpha-D-ribose 1-diphosphate.

It belongs to the UPRTase family. The cofactor is Mg(2+).

The enzyme catalyses UMP + diphosphate = 5-phospho-alpha-D-ribose 1-diphosphate + uracil. It functions in the pathway pyrimidine metabolism; UMP biosynthesis via salvage pathway; UMP from uracil: step 1/1. With respect to regulation, allosterically activated by GTP. Its function is as follows. Catalyzes the conversion of uracil and 5-phospho-alpha-D-ribose 1-diphosphate (PRPP) to UMP and diphosphate. This is Uracil phosphoribosyltransferase from Rhizobium leguminosarum bv. trifolii (strain WSM2304).